Reading from the N-terminus, the 223-residue chain is Ras-related protein Rab-32 (223 aa).

The residue at position 2 (alanine 2) is an N-acetylalanine. GTP is bound by residues valine 34, glycine 35, lysine 36, threonine 37, serine 38, serine 49, glutamine 50, tyrosine 52, and threonine 55. Threonine 37 lines the Mg(2+) pocket. The Switch 1 signature appears at glutamine 46–phenylalanine 60. Position 55 (threonine 55) interacts with Mg(2+). A Phosphoserine modification is found at serine 69. A Mg(2+)-binding site is contributed by aspartate 79. Residues glycine 82, asparagine 141, lysine 142, aspartate 144, alanine 173, and lysine 174 each contribute to the GTP site. Positions glycine 82 to lysine 95 match the Switch 2 motif. A PKA-RII subunit binding domain region spans residues asparagine 176–glutamine 195. 2 S-geranylgeranyl cysteine lipidation sites follow: cysteine 222 and cysteine 223.

Belongs to the small GTPase superfamily. Rab family. In terms of assembly, interacts with ANKRD27. A decreased interaction with ANKRD27 seen in the presence of SGSM2. Interacts with LRRK2 (via N-terminus); this interaction results in stimulation of RAB10 phosphorylation by LRRK2. Mg(2+) serves as cofactor. As to expression, widely expressed with highest levels in liver. Strong expression also found in melanocyte, platelet, mast cell and fibroblast cell lines.

It is found in the mitochondrion. Its subcellular location is the mitochondrion outer membrane. The protein resides in the cytoplasmic vesicle. The protein localises to the phagosome. It localises to the phagosome membrane. It is found in the melanosome. Its subcellular location is the melanosome membrane. The catalysed reaction is GTP + H2O = GDP + phosphate + H(+). With respect to regulation, regulated by guanine the nucleotide exchange factor (GEF) BLOC-3 complex composed of HPS1 and HPS4 which promote the exchange of bound GDP for free GTP. Regulated by the GTPase activating protein (GAP) SGSM2/RUTBC1 which increases the GTP hydrolysis activity. Inhibited by GDP dissociation inhibitors (GDIs) which prevent Rab-GDP dissociation. The small GTPases Rab are key regulators of intracellular membrane trafficking, from the formation of transport vesicles to their fusion with membranes. Rabs cycle between an inactive GDP-bound form and an active GTP-bound form that is able to recruit to membranes different set of downstream effectors directly responsible for vesicle formation, movement, tethering and fusion. Also acts as an A-kinase anchoring protein by binding to the type II regulatory subunit of protein kinase A and anchoring it to the mitochondrion. Also involved in synchronization of mitochondrial fission. Plays a role in the maturation of phagosomes that engulf pathogens, such as S.aureus and M.tuberculosis. Plays an important role in the control of melanin production and melanosome biogenesis. In concert with RAB38, regulates the proper trafficking of melanogenic enzymes TYR, TYRP1 and DCT/TYRP2 to melanosomes in melanocytes. Stimulates phosphorylation of RAB10 'Thr-73' by LRRK2. The chain is Ras-related protein Rab-32 from Mus musculus (Mouse).